The primary structure comprises 724 residues: Solute carrier organic anion transporter family member 4C1 (724 aa).

The segment at 1-80 (MQGSKGVENP…PPGSQLSELE (80 aa)) is disordered. The Cytoplasmic segment spans residues 1 to 101 (MQGSKGVENP…QCLQRCNNPK (101 aa)). 2 positions are modified to phosphoserine: Ser15 and Ser16. Phosphothreonine is present on Thr19. A phosphoserine mark is found at Ser24, Ser26, and Ser28. Polar residues predominate over residues 25 to 46 (ASPSQVEVSAVASRNQNGGSQP). The helical transmembrane segment at 102–122 (GFLLHYCLLALTQGIVVNGLV) threads the bilayer. Residues 123-141 (NISISTIEKRYEMKSSLTG) lie on the Extracellular side of the membrane. The helical transmembrane segment at 142 to 162 (LISSSYDISFCVLSLFVSFFG) threads the bilayer. At 163-168 (ERGHKP) the chain is on the cytoplasmic side. Residues 169 to 193 (RWLAFASFMIGLGALVFSLPHFFSG) traverse the membrane as a helical segment. Residues 194–218 (RYELGTIFEDTCLTRNSTRCASSTS) lie on the Extracellular side of the membrane. A helical transmembrane segment spans residues 219 to 249 (LLSNYFYVFVLGQLLLGTGGTPLYTLGTAFI). Residues 250–269 (DDSVPTHKSSLYIGIGYSMS) lie on the Cytoplasmic side of the membrane. A helical membrane pass occupies residues 270–290 (ILGPAIGYVLGGQLLTMYIDV). Over 291–306 (AMGQSSDLTEDDPRWL) the chain is Extracellular. The chain crosses the membrane as a helical span at residues 307-331 (GAWWIGFLLAWLFAWSLIMPFSCFP). Over 332–376 (KHLPGTAKIQAGKTSQTHQNNSTSFQHMDENFGKSIKDFPTAVKN) the chain is Cytoplasmic. A helical membrane pass occupies residues 377–398 (LMRNTVFICLVLSTTSEALVTT). The Extracellular portion of the chain corresponds to 399–418 (GFATFLPKFIENQFGLTSSF). The chain crosses the membrane as a helical span at residues 419–442 (AATLGGAVLIPGAALGQILGGVLV). Topologically, residues 443 to 446 (SKFK) are cytoplasmic. A helical transmembrane segment spans residues 447–470 (MKCKNTMKFALCTSGVALMLSFVF). Over 471 to 580 (IYAKCENGPF…KTQCSNLPIF (110 aa)) the chain is Extracellular. The Kazal-like domain maps to 494-549 (GNLTAPCNANCNCLRSYYYPLCGSDGVQYFSPCFAGCLNSVSNRKPKAYYNCSCIE). 3 disulfides stabilise this stretch: Cys500–Cys530, Cys506–Cys526, and Cys515–Cys547. Residues 581–603 (LGIFFITVIFTFMAGTPITVSIL) form a helical membrane-spanning segment. Over 604 to 612 (RCVNHRQRS) the chain is Cytoplasmic. The chain crosses the membrane as a helical span at residues 613–638 (LALGVQFMLLRLLGTIPGPIIFGVTI). At 639-672 (DSTCVLWDINECGTKGACWIYDNIRMAHMLVAIS) the chain is on the extracellular side. A helical transmembrane segment spans residues 673-690 (VTCKVITIFFNGLAIVLY). Residues 691-724 (KPPPPGTEVSFQSQNVVVSTITVEEDLNKIENEG) lie on the Cytoplasmic side of the membrane.

The protein belongs to the organo anion transporter (TC 2.A.60) family. As to expression, predominantly expressed in kidney and lung but also weakly expressed in brain. Localizes primarily in the proximal straight tubules, the S3 fraction of the nephron.

Its subcellular location is the basolateral cell membrane. It localises to the apical cell membrane. The enzyme catalyses estrone 3-sulfate(out) = estrone 3-sulfate(in). It carries out the reaction L-thyroxine(out) = L-thyroxine(in). It catalyses the reaction 3,3',5-triiodo-L-thyronine(out) = 3,3',5-triiodo-L-thyronine(in). The catalysed reaction is chenodeoxycholate(out) = chenodeoxycholate(in). The enzyme catalyses glycocholate(out) = glycocholate(in). It carries out the reaction L-homoarginine(in) = L-homoarginine(out). It catalyses the reaction L-arginine(in) = L-arginine(out). The catalysed reaction is N(omega),N(omega)-dimethyl-L-arginine(out) = N(omega),N(omega)-dimethyl-L-arginine(in). Its function is as follows. Mediates the transport of organic anions such as steroids (estrone 3-sulfate, chenodeoxycholate, glycocholate) and thyroid hormones (3,3',5-triiodo-L-thyronine (T3), L-thyroxine (T4)), in the kidney. Capable of transporting cAMP and pharmacological substances such as digoxin, ouabain and methotrexate. Transport is independent of sodium, chloride ion, and ATP. Transport activity is stimulated by an acidic extracellular environment due to increased substrate affinity to the transporter. The driving force for this transport activity is currently not known. The role of hydrogencarbonate (HCO3(-), bicarbonate) as the probable counteranion that exchanges for organic anions is still not well defined. Functions as an uptake transporter at the apical membrane, suggesting a role in renal reabsorption. Involved in the renal secretion of the uremic toxin ADMA (N(omega),N(omega)-dimethyl-L-arginine or asymmetrical dimethylarginine), which is associated to cardiovascular events and mortality, and the structurally related amino acids L-arginine and L-homoarginine (a cardioprotective biomarker). Can act bidirectionally, suggesting a dual protective role of this transport protein; exporting L-homoarginine after being synthesized in proximal tubule cells, and mediating uptake of ADMA from the blood into proximal tubule cells where it is degraded by the enzyme dimethylarginine dimethylaminohydrolase 1 (DDAH1). May be involved in sperm maturation by enabling directed movement of organic anions and compounds within or between cells. This ion-transporting process is important to maintain the strict epididymal homeostasis necessary for sperm maturation. May have a role in secretory functions since seminal vesicle epithelial cells are assumed to secrete proteins involved in decapacitation by modifying surface proteins to facilitate the acquisition of the ability to fertilize the egg. The polypeptide is Solute carrier organic anion transporter family member 4C1 (Rattus norvegicus (Rat)).